We begin with the raw amino-acid sequence, 118 residues long: UPF0342 protein BpOF4_11360 (118 aa).

Belongs to the UPF0342 family.

In Alkalihalophilus pseudofirmus (strain ATCC BAA-2126 / JCM 17055 / OF4) (Bacillus pseudofirmus), this protein is UPF0342 protein BpOF4_11360.